Reading from the N-terminus, the 102-residue chain is ATP-dependent Clp protease adapter protein ClpS (102 aa).

Residues 1–18 show a composition bias toward basic and acidic residues; it reads MSQFDHQHLSDTEEKQEL. A disordered region spans residues 1–21; it reads MSQFDHQHLSDTEEKQELKPP.

It belongs to the ClpS family. In terms of assembly, binds to the N-terminal domain of the chaperone ClpA.

Its function is as follows. Involved in the modulation of the specificity of the ClpAP-mediated ATP-dependent protein degradation. The protein is ATP-dependent Clp protease adapter protein ClpS of Idiomarina loihiensis (strain ATCC BAA-735 / DSM 15497 / L2-TR).